Here is a 245-residue protein sequence, read N- to C-terminus: tRNA (guanine-N(1)-)-methyltransferase (245 aa).

Residues G114 and 134-139 (IGDYIL) each bind S-adenosyl-L-methionine.

The protein belongs to the RNA methyltransferase TrmD family. As to quaternary structure, homodimer.

It localises to the cytoplasm. It catalyses the reaction guanosine(37) in tRNA + S-adenosyl-L-methionine = N(1)-methylguanosine(37) in tRNA + S-adenosyl-L-homocysteine + H(+). Specifically methylates guanosine-37 in various tRNAs. This is tRNA (guanine-N(1)-)-methyltransferase from Listeria monocytogenes serotype 4b (strain CLIP80459).